The chain runs to 152 residues: UPF0266 membrane protein YobD (152 aa).

3 consecutive transmembrane segments (helical) span residues 6–26 (LVLILFIAVLLAFAIYDQFIM), 45–65 (IDSVIFVGLIVILIYNSVTNH), and 67–87 (ALITTWLLSALALMGFYIFWI).

This sequence belongs to the UPF0266 family.

It localises to the cell inner membrane. The protein is UPF0266 membrane protein YobD of Escherichia coli O127:H6 (strain E2348/69 / EPEC).